The following is a 547-amino-acid chain: Chaperonin GroEL (547 aa).

Residues 30–33, K51, 87–91, G415, and D495 contribute to the ATP site; these read TLGP and DGTTT.

The protein belongs to the chaperonin (HSP60) family. Forms a cylinder of 14 subunits composed of two heptameric rings stacked back-to-back. Interacts with the co-chaperonin GroES.

The protein resides in the cytoplasm. The catalysed reaction is ATP + H2O + a folded polypeptide = ADP + phosphate + an unfolded polypeptide.. In terms of biological role, together with its co-chaperonin GroES, plays an essential role in assisting protein folding. The GroEL-GroES system forms a nano-cage that allows encapsulation of the non-native substrate proteins and provides a physical environment optimized to promote and accelerate protein folding. This is Chaperonin GroEL from Pasteurella multocida (strain Pm70).